Reading from the N-terminus, the 367-residue chain is Damage-control phosphatase At2g17340 (367 aa).

Met-1 is modified (N-acetylmethionine). The Mn(2+) site is built by Asp-220, Asn-221, and Asp-256. The Subfamily II EGMGR motif motif lies at 318–322; sequence EGMGR.

Belongs to the damage-control phosphatase family. Phosphopantetheine phosphatase II subfamily. As to quaternary structure, multimer. The cofactor is Mn(2+). Requires Ni(2+) as cofactor.

With respect to regulation, activity is strongly promoted by Co(2+), Ni(2+), Mg(2+), Cu(2+) and Mn(2+). Activity is inhibited by EDTA. Its function is as follows. Metal-dependent phosphatase with probable damage-control functions. Shows phosphatase activity against several substrates, including sugar phosphates and p-nitrophenyl phosphate(pNPP). Prefers sugar phosphate substrates, including the extremely potent glycating agents ribose-5-phosphate and erythrose-4-phosphate. The sequence is that of Damage-control phosphatase At2g17340 from Arabidopsis thaliana (Mouse-ear cress).